An 87-amino-acid chain; its full sequence is Protein L (87 aa).

In terms of biological role, this protein inhibits the multiplication of double-stranded DNA phages, such as P1 and lambda. This is Protein L (L) from Escherichia coli.